The chain runs to 277 residues: Release factor glutamine methyltransferase (277 aa).

Residues 117 to 121 (GTGTG), Asp140, Trp168, and Asn183 each bind S-adenosyl-L-methionine. 183–186 (NPPY) is a substrate binding site.

The protein belongs to the protein N5-glutamine methyltransferase family. PrmC subfamily.

It catalyses the reaction L-glutaminyl-[peptide chain release factor] + S-adenosyl-L-methionine = N(5)-methyl-L-glutaminyl-[peptide chain release factor] + S-adenosyl-L-homocysteine + H(+). Functionally, methylates the class 1 translation termination release factors RF1/PrfA and RF2/PrfB on the glutamine residue of the universally conserved GGQ motif. This Shigella dysenteriae serotype 1 (strain Sd197) protein is Release factor glutamine methyltransferase.